Reading from the N-terminus, the 499-residue chain is MSEVRVRFCPSPTGTPHVGMVRTALFNWAYARHTGGKLIFRIEDTDAQRDTEESYQAIIDSLKWLGLDWDEGIETGGPHEPYRQSQRMDIYAEVLEKLKAAGEVYPAYSTPEEVEERHKAAGRDPKLGYDNYDRDLTEEQIAAFEAEGRKPVWRLKMDHDRRYTWTDLVRGEMDVDGKTMPDFVVARSNGQPLYTLVNPLDDALMGITHVLRGEDLLPSTPRQIALYEALIRIGVAKEVPTFAHLPFVTGEGNRKLSKRDPESNLFNHRDAGVIPEGMLNYLSLLGWSLSADEDIFTMAQLIENFDIADVKPNPARFDHKKMEAINADHIRMLDLADFTQRLRTYLEEFKGWPADYPADKFAFAAELVQTRIKVLGDADGLLRFLLTKDEDLELEPKAARKNLKEAAKEPLEAAIEELEAIAEEDFRTEPIEQALSTRLIEQMELKPRVAYGALRVAICGQAVSPPLFESMELLGKDSTLVRLRAGLEQTPFQAEQPAN.

The 'HIGH' region motif lies at Pro-10–Met-20. The short motif at Lys-255 to Arg-259 is the 'KMSKS' region element. Lys-258 serves as a coordination point for ATP.

The protein belongs to the class-I aminoacyl-tRNA synthetase family. Glutamate--tRNA ligase type 1 subfamily. In terms of assembly, monomer.

The protein resides in the cytoplasm. The catalysed reaction is tRNA(Glu) + L-glutamate + ATP = L-glutamyl-tRNA(Glu) + AMP + diphosphate. Its function is as follows. Catalyzes the attachment of glutamate to tRNA(Glu) in a two-step reaction: glutamate is first activated by ATP to form Glu-AMP and then transferred to the acceptor end of tRNA(Glu). The chain is Glutamate--tRNA ligase from Corynebacterium urealyticum (strain ATCC 43042 / DSM 7109).